A 63-amino-acid chain; its full sequence is Metallothionein (63 aa).

The interval 1–30 (MDPQDCTCAAGDSCSCAGSCKCKNCRCRSC) is beta. A divalent metal cation is bound by residues Cys6, Cys8, Cys14, Cys16, Cys20, Cys22, Cys25, Cys27, Cys30, Cys34, Cys35, Cys37, Cys38, Cys42, Cys45, Cys49, Cys51, Cys59, Cys61, and Cys62. The segment at 31-63 (RKSCCSCCPAGCNNCAKGCVCKEPASSKCSCCH) is alpha.

This sequence belongs to the metallothionein superfamily. Type 1 family.

Metallothioneins have a high content of cysteine residues that bind various heavy metals. In Anas platyrhynchos (Mallard), this protein is Metallothionein.